Consider the following 406-residue polypeptide: Enoyl-[acyl-carrier-protein] reductase [NADH] (406 aa).

NAD(+)-binding positions include G48–F53, F74–E75, D111–A112, and I140–A141. Y226 is a binding site for substrate. Y236 acts as the Proton donor in catalysis. NAD(+)-binding positions include K245 and L275–T277.

It belongs to the TER reductase family. In terms of assembly, monomer.

It carries out the reaction a 2,3-saturated acyl-[ACP] + NAD(+) = a (2E)-enoyl-[ACP] + NADH + H(+). It functions in the pathway lipid metabolism; fatty acid biosynthesis. In terms of biological role, involved in the final reduction of the elongation cycle of fatty acid synthesis (FAS II). Catalyzes the reduction of a carbon-carbon double bond in an enoyl moiety that is covalently linked to an acyl carrier protein (ACP). The sequence is that of Enoyl-[acyl-carrier-protein] reductase [NADH] from Coxiella burnetii (strain CbuK_Q154) (Coxiella burnetii (strain Q154)).